A 630-amino-acid polypeptide reads, in one-letter code: Chaperone protein HtpG (630 aa).

The tract at residues 1 to 339 is a; substrate-binding; the sequence is MKGQETRGFQ…SNDLPLNVSR (339 aa). Residues 340–555 are b; sequence EILQDNSITR…VDEMSTQMAK (216 aa). Residues 556–630 are c; the sequence is LFAAAGQQVP…MNQLLLSEKA (75 aa).

Belongs to the heat shock protein 90 family. In terms of assembly, homodimer.

It localises to the cytoplasm. Its function is as follows. Molecular chaperone. Has ATPase activity. This is Chaperone protein HtpG from Photorhabdus laumondii subsp. laumondii (strain DSM 15139 / CIP 105565 / TT01) (Photorhabdus luminescens subsp. laumondii).